The sequence spans 32 residues: 24 kDa flagellin (32 aa).

The protein belongs to the archaeal flagellin family. In terms of processing, glycosylated.

It localises to the archaeal flagellum. Its function is as follows. Flagellin is the subunit protein which polymerizes to form the filaments of archaeal flagella. This is 24 kDa flagellin from Methanospirillum hungatei.